We begin with the raw amino-acid sequence, 455 residues long: Probable glycine dehydrogenase (decarboxylating) subunit 1 (455 aa).

This sequence belongs to the GcvP family. N-terminal subunit subfamily. As to quaternary structure, the glycine cleavage system is composed of four proteins: P, T, L and H. In this organism, the P 'protein' is a heterodimer of two subunits.

It catalyses the reaction N(6)-[(R)-lipoyl]-L-lysyl-[glycine-cleavage complex H protein] + glycine + H(+) = N(6)-[(R)-S(8)-aminomethyldihydrolipoyl]-L-lysyl-[glycine-cleavage complex H protein] + CO2. Its function is as follows. The glycine cleavage system catalyzes the degradation of glycine. The P protein binds the alpha-amino group of glycine through its pyridoxal phosphate cofactor; CO(2) is released and the remaining methylamine moiety is then transferred to the lipoamide cofactor of the H protein. This Francisella tularensis subsp. holarctica (strain FTNF002-00 / FTA) protein is Probable glycine dehydrogenase (decarboxylating) subunit 1.